The chain runs to 207 residues: Glutathione S-transferase 3 (207 aa).

Positions 2-79 (VHYKLTYFNA…YLARKFGFVG (78 aa)) constitute a GST N-terminal domain. Residues tyrosine 8, lysine 43, 49 to 51 (GQV), and 63 to 64 (QS) contribute to the glutathione site. Residues 81 to 207 (TAEEELQADE…WLAKRPETRF (127 aa)) enclose the GST C-terminal domain.

It belongs to the GST superfamily. Sigma family.

It catalyses the reaction RX + glutathione = an S-substituted glutathione + a halide anion + H(+). Its function is as follows. Conjugation of reduced glutathione to a wide number of exogenous and endogenous hydrophobic electrophiles. In Caenorhabditis elegans, this protein is Glutathione S-transferase 3 (gst-3).